An 84-amino-acid polypeptide reads, in one-letter code: Exodeoxyribonuclease 7 small subunit (84 aa).

Belongs to the XseB family. In terms of assembly, heterooligomer composed of large and small subunits.

The protein resides in the cytoplasm. The catalysed reaction is Exonucleolytic cleavage in either 5'- to 3'- or 3'- to 5'-direction to yield nucleoside 5'-phosphates.. Bidirectionally degrades single-stranded DNA into large acid-insoluble oligonucleotides, which are then degraded further into small acid-soluble oligonucleotides. This is Exodeoxyribonuclease 7 small subunit from Bacillus velezensis (strain DSM 23117 / BGSC 10A6 / LMG 26770 / FZB42) (Bacillus amyloliquefaciens subsp. plantarum).